We begin with the raw amino-acid sequence, 455 residues long: Probable circularly permuted 1,3-beta-glucanase TOS1 (455 aa).

The signal sequence occupies residues Met1 to Ala23. The segment at Thr158–Gly221 is disordered. Residues Ser172–Glu189 show a composition bias toward polar residues. Residues Thr190 to Thr219 are compositionally biased toward low complexity. A glycan (N-linked (GlcNAc...) asparagine) is linked at Asn236. The short motif at Glu372–Glu377 is the ExDxxE motif element. A glycan (N-linked (GlcNAc...) asparagine) is linked at Asn417.

It belongs to the PGA52 family.

The protein resides in the secreted. Its subcellular location is the cell wall. The catalysed reaction is Hydrolysis of (1-&gt;3)-beta-D-glucosidic linkages in (1-&gt;3)-beta-D-glucans.. Probable circularly permuted 1,3-beta-glucanase involved in cell wall modification through beta-1,3-glucan network alterations such as increased branching or remodeling. This is Probable circularly permuted 1,3-beta-glucanase TOS1 from Saccharomyces cerevisiae (strain ATCC 204508 / S288c) (Baker's yeast).